The chain runs to 398 residues: uncharacterized protein (398 aa).

The next 10 membrane-spanning stretches (helical) occupy residues 43–65, 89–108, 156–173, 180–198, 224–246, 259–281, 291–311, 316–338, 351–373, and 380–397; these read PILPMLITSVGGGSLSIGLVGGL, IFVVLGYLTSSMFKLLLGLS, TAGAILGSTLSLLFILYL, IILIAAVIGFLTLIPLYFV, LFILISAIFTLSNFSYMFYILRA, IIIPIALYILYNIFYATFSIPFG, SVLTIGYIVYGIVSLGFAYFI, LILLFALYGIAYALFAGNQKAYV, LGLFYTVVGLTSLPASLIAGYLW, and TFLYGSVLAIISGLLLLF.

This sequence belongs to the major facilitator superfamily.

The protein localises to the cell membrane. This is an uncharacterized protein from Methanocaldococcus jannaschii (strain ATCC 43067 / DSM 2661 / JAL-1 / JCM 10045 / NBRC 100440) (Methanococcus jannaschii).